The sequence spans 298 residues: Protease HtpX homolog (298 aa).

The next 2 membrane-spanning stretches (helical) occupy residues 14–34 and 39–59; these read ILVM…IGYL and VIGG…VIIG. Histidine 144 contributes to the Zn(2+) binding site. Residue glutamate 145 is part of the active site. Histidine 148 is a Zn(2+) binding site. 2 helical membrane-spanning segments follow: residues 159–179 and 195–215; these read IALA…NFWW and IFAI…ATIA. Residue glutamate 224 coordinates Zn(2+).

This sequence belongs to the peptidase M48B family. Requires Zn(2+) as cofactor.

It localises to the cell membrane. This Limosilactobacillus reuteri (strain DSM 20016) (Lactobacillus reuteri) protein is Protease HtpX homolog.